A 382-amino-acid polypeptide reads, in one-letter code: Histone acetyltransferase type B subunit 2 (382 aa).

WD repeat units lie at residues 98–138 (ENNA…RYSH), 141–181 (PHTK…TTFK), 184–224 (IQKD…VVSQ), 228–268 (ESSN…ENSG), and 275–315 (GHSE…EEQQ). The tract at residues 317 to 321 (EDAED) is interaction with the histone H4 N-terminus. Residues 332–372 (GHTAGVSDLSWCPFKDWMIGSVADDNIVHLWEISKKLITNE) form a WD 6 repeat.

It belongs to the WD repeat RBAP46/RBAP48/MSI1 family. As to quaternary structure, component of the HAT-B complex composed of at least HAT1 and HAT2. The HAT-B complex binds to histone H4 tail.

The protein localises to the cytoplasm. It localises to the nucleus. Regulatory subunit of the histone acetylase B (HAT-B) complex. The complex acetylates 'Lys-14' of histone H4 which is required for telomeric silencing. The polypeptide is Histone acetyltransferase type B subunit 2 (HAT2) (Candida albicans (strain SC5314 / ATCC MYA-2876) (Yeast)).